The chain runs to 307 residues: Acetaldehyde dehydrogenase 1 (307 aa).

C132 serves as the catalytic Acyl-thioester intermediate. NAD(+) is bound by residues 163-171 (SVGPGTRKN) and N274.

It belongs to the acetaldehyde dehydrogenase family.

The enzyme catalyses acetaldehyde + NAD(+) + CoA = acetyl-CoA + NADH + H(+). The chain is Acetaldehyde dehydrogenase 1 (tesF) from Comamonas testosteroni (Pseudomonas testosteroni).